A 413-amino-acid chain; its full sequence is Peptidase T (413 aa).

Histidine 82 contributes to the Zn(2+) binding site. The active site involves aspartate 84. Aspartate 145 serves as a coordination point for Zn(2+). The active-site Proton acceptor is glutamate 179. Zn(2+) contacts are provided by glutamate 180, aspartate 202, and histidine 384.

The protein belongs to the peptidase M20B family. Zn(2+) is required as a cofactor.

The protein resides in the cytoplasm. It catalyses the reaction Release of the N-terminal residue from a tripeptide.. Cleaves the N-terminal amino acid of tripeptides. This is Peptidase T from Latilactobacillus sakei subsp. sakei (strain 23K) (Lactobacillus sakei subsp. sakei).